Reading from the N-terminus, the 74-residue chain is DNA-directed RNA polymerase subunit omega (74 aa).

The protein belongs to the RNA polymerase subunit omega family. In terms of assembly, the RNAP catalytic core consists of 2 alpha, 1 beta, 1 beta' and 1 omega subunit. When a sigma factor is associated with the core the holoenzyme is formed, which can initiate transcription.

The enzyme catalyses RNA(n) + a ribonucleoside 5'-triphosphate = RNA(n+1) + diphosphate. Its function is as follows. Promotes RNA polymerase assembly. Latches the N- and C-terminal regions of the beta' subunit thereby facilitating its interaction with the beta and alpha subunits. The sequence is that of DNA-directed RNA polymerase subunit omega from Helicobacter pylori (strain Shi470).